We begin with the raw amino-acid sequence, 371 residues long: F-box protein At2g41170 (371 aa).

The F-box domain occupies 56–102 (KMSLLDLPDLTLDCILEKLSPSELCAMTSVCSELRDKCVSDHLWEKH).

The chain is F-box protein At2g41170 from Arabidopsis thaliana (Mouse-ear cress).